We begin with the raw amino-acid sequence, 298 residues long: MSTSIPDVAVHDSPAIAAPLRWVGMDGIVVPVQLTIADGGQHVIGRARAQIDLPAMEVKGIHMSRLYRLLDTHAVEPLTPVGICGLLSAMVNSHADCASTAARVDWYFDWLRRVPALVSNDLSGWRGYPVWLRAEYSAGHVQFWLCVEVGYSSTCPCSAALARQMLADAFLQEHVEVSALSPETVADWLRSNGSYATPHSQRSLARIEVALTEQAVELGLPALVDCAERILSTPVQAAVRRVDEQAFARLNGANLMYVEDATRRLQHGLAIHYSAFRVHVRHLESLHPHDAVASTADE.

Belongs to the GTP cyclohydrolase IV family.

It carries out the reaction GTP + H2O = 7,8-dihydroneopterin 3'-triphosphate + formate + H(+). It participates in cofactor biosynthesis; 7,8-dihydroneopterin triphosphate biosynthesis; 7,8-dihydroneopterin triphosphate from GTP: step 1/1. Its function is as follows. Converts GTP to 7,8-dihydroneopterin triphosphate. The polypeptide is GTP cyclohydrolase FolE2 (Xylella fastidiosa (strain M12)).